The chain runs to 232 residues: Large ribosomal subunit protein uL1 (232 aa).

This sequence belongs to the universal ribosomal protein uL1 family. In terms of assembly, part of the 50S ribosomal subunit.

Binds directly to 23S rRNA. The L1 stalk is quite mobile in the ribosome, and is involved in E site tRNA release. Its function is as follows. Protein L1 is also a translational repressor protein, it controls the translation of the L11 operon by binding to its mRNA. This is Large ribosomal subunit protein uL1 from Stenotrophomonas maltophilia (strain R551-3).